The primary structure comprises 411 residues: NAD-dependent dihydropyrimidine dehydrogenase subunit PreA (411 aa).

Substrate is bound by residues asparagine 76 and 134–136 (NFS). Cysteine 137 (nucleophile) is an active-site residue. 201 to 202 (NT) is a binding site for substrate. 2 4Fe-4S ferredoxin-type domains span residues 335-367 (VYPRINLDKCVGCGRCYISCYDGGHQAMEWSEK) and 369-398 (RTPHCNTEKCVGCLLCGHVCPVGCIELGEV). [4Fe-4S] cluster contacts are provided by cysteine 344, cysteine 347, cysteine 350, cysteine 354, cysteine 378, cysteine 381, cysteine 384, and cysteine 388.

This sequence belongs to the dihydropyrimidine dehydrogenase family. Heterotetramer of 2 PreA and 2 PreT subunits. The cofactor is [4Fe-4S] cluster.

The catalysed reaction is 5,6-dihydrouracil + NAD(+) = uracil + NADH + H(+). The enzyme catalyses 5,6-dihydrothymine + NAD(+) = thymine + NADH + H(+). In terms of biological role, involved in pyrimidine base degradation. Catalyzes physiologically the reduction of uracil to 5,6-dihydrouracil (DHU) by using NADH as a specific cosubstrate. It also catalyzes the reverse reaction and the reduction of thymine to 5,6-dihydrothymine (DHT). The sequence is that of NAD-dependent dihydropyrimidine dehydrogenase subunit PreA (preA) from Escherichia coli O157:H7.